Reading from the N-terminus, the 305-residue chain is MVNIEKFIDQAVREIRDAAGEDKVVMALSGGVDSSVCAALATRAIGDQLVPIYVDTGLMRKGETDRIRSLFADANLRVVDAADEFFEALAGIVDPEEKRKAIGAKFIRIFEREAKRTGATMLLQGTIYPDRIESEGGIKSHHNVGGMPLDIEFKGVIEPLADLYKDEVREVAGGLGLPAEIQHRMPFPGPGLAVRVLGEVTKEKIAIVREANAIVEECLVEEFRPWQCFAALIGLGTGVKGDVRLHGWIVAVRAVGSRDGMTADPLLLPYETLSRMATRITAEIPGVARVVYDVTPKPPATIEYE.

A GMPS ATP-PPase domain is found at 2–184 (VNIEKFIDQA…LGLPAEIQHR (183 aa)). An ATP-binding site is contributed by 29 to 35 (SGGVDSS).

Heterodimer composed of a glutamine amidotransferase subunit (A) and a GMP-binding subunit (B).

It catalyses the reaction XMP + L-glutamine + ATP + H2O = GMP + L-glutamate + AMP + diphosphate + 2 H(+). It participates in purine metabolism; GMP biosynthesis; GMP from XMP (L-Gln route): step 1/1. Its function is as follows. Catalyzes the synthesis of GMP from XMP. The sequence is that of GMP synthase [glutamine-hydrolyzing] subunit B from Methanoculleus marisnigri (strain ATCC 35101 / DSM 1498 / JR1).